Here is a 205-residue protein sequence, read N- to C-terminus: Macrophage immunometabolism regulator (205 aa).

Residues 1-40 form a disordered region; that stretch reads MEVDINGVNRTNNSVPSTAEGSSPSKPDPEKPRCSSTPCS. A compositionally biased stretch (polar residues) spans 8–25; it reads VNRTNNSVPSTAEGSSPS.

The protein belongs to the UNC119-binding protein family. Interacts with unc119 family proteins; interaction preferentially takes place when unc119 proteins are unliganded with myristoylated proteins.

It is found in the cytoplasm. The protein localises to the cell projection. It localises to the cilium. Its function is as follows. May play a role in immune regulation through regulation of the macrophage function. May also play a role in trafficking of proteins via its interaction with unc119 family cargo adapters. May play a role in ciliary membrane localization. This chain is Macrophage immunometabolism regulator (macir), found in Xenopus laevis (African clawed frog).